An 86-amino-acid chain; its full sequence is Large ribosomal subunit protein uL23 (86 aa).

It belongs to the universal ribosomal protein uL23 family. In terms of assembly, part of the 50S ribosomal subunit. Contacts protein L29.

Functionally, binds to 23S rRNA. One of the proteins that surrounds the polypeptide exit tunnel on the outside of the ribosome. The protein is Large ribosomal subunit protein uL23 of Methanothermobacter thermautotrophicus (strain ATCC 29096 / DSM 1053 / JCM 10044 / NBRC 100330 / Delta H) (Methanobacterium thermoautotrophicum).